The sequence spans 408 residues: Putative FBD-associated F-box protein At5g50270 (408 aa).

The region spanning 1-54 is the F-box domain; the sequence is MDRISGLPDELLLRVLSLLPNVKDVVVTMVLSKRWQFLWMMVPKLVYDDSYQNL. The 64-residue stretch at 345–408 folds into the FBD domain; sequence PLRDDLSSVP…VNPDKKYEMI (64 aa).

The polypeptide is Putative FBD-associated F-box protein At5g50270 (Arabidopsis thaliana (Mouse-ear cress)).